A 356-amino-acid chain; its full sequence is Dual-specificity RNA methyltransferase RlmN (356 aa).

Catalysis depends on E95, which acts as the Proton acceptor. The Radical SAM core domain maps to 101–332 (EDERGTLCIS…VTVIRDRRGE (232 aa)). C108 and C338 are disulfide-bonded. Residues C115, C119, and C122 each contribute to the [4Fe-4S] cluster site. Residues 165–166 (GE), S197, 219–221 (SLH), and N295 contribute to the S-adenosyl-L-methionine site. Residue C338 is the S-methylcysteine intermediate of the active site.

The protein belongs to the radical SAM superfamily. RlmN family. [4Fe-4S] cluster is required as a cofactor.

The protein localises to the cytoplasm. The catalysed reaction is adenosine(2503) in 23S rRNA + 2 reduced [2Fe-2S]-[ferredoxin] + 2 S-adenosyl-L-methionine = 2-methyladenosine(2503) in 23S rRNA + 5'-deoxyadenosine + L-methionine + 2 oxidized [2Fe-2S]-[ferredoxin] + S-adenosyl-L-homocysteine. It carries out the reaction adenosine(37) in tRNA + 2 reduced [2Fe-2S]-[ferredoxin] + 2 S-adenosyl-L-methionine = 2-methyladenosine(37) in tRNA + 5'-deoxyadenosine + L-methionine + 2 oxidized [2Fe-2S]-[ferredoxin] + S-adenosyl-L-homocysteine. Its function is as follows. Specifically methylates position 2 of adenine 2503 in 23S rRNA and position 2 of adenine 37 in tRNAs. m2A2503 modification seems to play a crucial role in the proofreading step occurring at the peptidyl transferase center and thus would serve to optimize ribosomal fidelity. This chain is Dual-specificity RNA methyltransferase RlmN, found in Magnetococcus marinus (strain ATCC BAA-1437 / JCM 17883 / MC-1).